Reading from the N-terminus, the 210-residue chain is dTTP/UTP pyrophosphatase (210 aa).

Asp-85 (proton acceptor) is an active-site residue.

This sequence belongs to the Maf family. YhdE subfamily. Requires a divalent metal cation as cofactor.

The protein localises to the cytoplasm. It catalyses the reaction dTTP + H2O = dTMP + diphosphate + H(+). The catalysed reaction is UTP + H2O = UMP + diphosphate + H(+). Functionally, nucleoside triphosphate pyrophosphatase that hydrolyzes dTTP and UTP. May have a dual role in cell division arrest and in preventing the incorporation of modified nucleotides into cellular nucleic acids. The sequence is that of dTTP/UTP pyrophosphatase from Saccharophagus degradans (strain 2-40 / ATCC 43961 / DSM 17024).